The sequence spans 396 residues: Flavohemoprotein (396 aa).

The Globin domain maps to 1 to 136; that stretch reads MLDAQTIATV…LANVFINREA (136 aa). Position 85 (His85) interacts with heme b. Residues Tyr95 and Glu135 each act as charge relay system in the active site. Positions 147–396 are reductase; the sequence is GGWEGTRDFR…YECFGPHKVL (250 aa). The FAD-binding FR-type domain occupies 150–255; the sequence is EGTRDFRIVA…VAPAGDFFMA (106 aa). FAD-binding positions include Tyr188 and 204 to 207; that span reads RQYS. 268 to 273 lines the NADP(+) pocket; that stretch reads GVGQTP. An FAD-binding site is contributed by 389 to 392; it reads CFGP.

This sequence belongs to the globin family. Two-domain flavohemoproteins subfamily. In the C-terminal section; belongs to the flavoprotein pyridine nucleotide cytochrome reductase family. Monomer. FAD serves as cofactor. The cofactor is heme b.

The protein localises to the cytoplasm. It catalyses the reaction 2 nitric oxide + NADPH + 2 O2 = 2 nitrate + NADP(+) + H(+). It carries out the reaction 2 nitric oxide + NADH + 2 O2 = 2 nitrate + NAD(+) + H(+). Its function is as follows. Is involved in NO detoxification in an aerobic process, termed nitric oxide dioxygenase (NOD) reaction that utilizes O(2) and NAD(P)H to convert NO to nitrate, which protects the bacterium from various noxious nitrogen compounds. Therefore, plays a central role in the inducible response to nitrosative stress. In the presence of oxygen and NADH, HMP has NADH oxidase activity, which leads to the generation of superoxide and H(2)O(2), both in vitro and in vivo, and it has been suggested that HMP might act as an amplifier of superoxide stress. Under anaerobic conditions, HMP also exhibits nitric oxide reductase and FAD reductase activities. However, all these reactions are much lower than NOD activity. In terms of biological role, various electron acceptors are also reduced by HMP in vitro, including dihydropterine, ferrisiderophores, ferric citrate, cytochrome c, nitrite, S-nitrosoglutathione, and alkylhydroperoxides. However, it is unknown if these reactions are of any biological significance in vivo. This Escherichia coli (strain K12) protein is Flavohemoprotein (hmp).